Here is a 117-residue protein sequence, read N- to C-terminus: Ribosome-binding factor A (117 aa).

Belongs to the RbfA family. As to quaternary structure, monomer. Binds 30S ribosomal subunits, but not 50S ribosomal subunits or 70S ribosomes.

It is found in the cytoplasm. In terms of biological role, one of several proteins that assist in the late maturation steps of the functional core of the 30S ribosomal subunit. Associates with free 30S ribosomal subunits (but not with 30S subunits that are part of 70S ribosomes or polysomes). Required for efficient processing of 16S rRNA. May interact with the 5'-terminal helix region of 16S rRNA. This chain is Ribosome-binding factor A, found in Blochmanniella floridana.